Consider the following 181-residue polypeptide: Adenine phosphoribosyltransferase (181 aa).

It belongs to the purine/pyrimidine phosphoribosyltransferase family. Homodimer.

The protein resides in the cytoplasm. The catalysed reaction is AMP + diphosphate = 5-phospho-alpha-D-ribose 1-diphosphate + adenine. The protein operates within purine metabolism; AMP biosynthesis via salvage pathway; AMP from adenine: step 1/1. Its function is as follows. Catalyzes a salvage reaction resulting in the formation of AMP, that is energically less costly than de novo synthesis. This Shewanella woodyi (strain ATCC 51908 / MS32) protein is Adenine phosphoribosyltransferase.